We begin with the raw amino-acid sequence, 936 residues long: Isoleucine--tRNA ligase (936 aa).

A 'HIGH' region motif is present at residues proline 58–histidine 68. Residue glutamate 560 participates in L-isoleucyl-5'-AMP binding. Residues lysine 601–serine 605 carry the 'KMSKS' region motif. Lysine 604 serves as a coordination point for ATP. Cysteine 899, cysteine 902, cysteine 919, and cysteine 922 together coordinate Zn(2+).

The protein belongs to the class-I aminoacyl-tRNA synthetase family. IleS type 1 subfamily. As to quaternary structure, monomer. It depends on Zn(2+) as a cofactor.

Its subcellular location is the cytoplasm. It carries out the reaction tRNA(Ile) + L-isoleucine + ATP = L-isoleucyl-tRNA(Ile) + AMP + diphosphate. In terms of biological role, catalyzes the attachment of isoleucine to tRNA(Ile). As IleRS can inadvertently accommodate and process structurally similar amino acids such as valine, to avoid such errors it has two additional distinct tRNA(Ile)-dependent editing activities. One activity is designated as 'pretransfer' editing and involves the hydrolysis of activated Val-AMP. The other activity is designated 'posttransfer' editing and involves deacylation of mischarged Val-tRNA(Ile). This chain is Isoleucine--tRNA ligase, found in Proteus mirabilis (strain HI4320).